A 447-amino-acid chain; its full sequence is uncharacterized protein (447 aa).

This sequence belongs to the class-II fumarase/aspartase family.

It is found in the cytoplasm. Its subcellular location is the nucleus. This is an uncharacterized protein from Schizosaccharomyces pombe (strain 972 / ATCC 24843) (Fission yeast).